Consider the following 192-residue polypeptide: Small ribosomal subunit protein eS7 (192 aa).

It belongs to the eukaryotic ribosomal protein eS7 family.

The polypeptide is Small ribosomal subunit protein eS7 (RPS7) (Secale cereale (Rye)).